The following is a 628-amino-acid chain: Chaperone protein HtpG (628 aa).

The a; substrate-binding stretch occupies residues 1–337; sequence MSEKKYTFET…SADLPLNVSR (337 aa). The tract at residues 338–554 is b; the sequence is EILQHNKVID…DYGMSLHMQK (217 aa). The tract at residues 555–628 is c; that stretch reads MMEEAGQSFM…FVKLVNKYIR (74 aa).

The protein belongs to the heat shock protein 90 family. Homodimer.

It is found in the cytoplasm. Molecular chaperone. Has ATPase activity. The sequence is that of Chaperone protein HtpG from Francisella tularensis subsp. holarctica (strain FTNF002-00 / FTA).